The chain runs to 531 residues: Splicing factor ESS-2 (531 aa).

2 disordered regions span residues R104–K163 and P453–F531. Over residues T105–E114 the composition is skewed to polar residues. Low complexity-rich tracts occupy residues T125 to A136 and S464 to S477. The span at S480–G498 shows a compositional bias: polar residues.

The protein belongs to the ESS2 family.

The protein localises to the nucleus. Regulates pre-mRNA splicing. The sequence is that of Splicing factor ESS-2 (ess-2) from Caenorhabditis elegans.